Reading from the N-terminus, the 90-residue chain is uncharacterized protein (90 aa).

This is an uncharacterized protein from Archaeoglobus fulgidus (strain ATCC 49558 / DSM 4304 / JCM 9628 / NBRC 100126 / VC-16).